The primary structure comprises 214 residues: Adenylate kinase (214 aa).

Residue 10–15 (GAGKGT) participates in ATP binding. The segment at 30 to 59 (STGDMLRAAIKAGTELGKQAKAVIDAGQLV) is NMP. Residues threonine 31, arginine 36, 57-59 (QLV), 85-88 (GFPR), and glutamine 92 each bind AMP. The tract at residues 122–159 (GRRAHLPSGRTYHVVYNPPKVEGKDDVTGEDLVVRDDD) is LID. Residues arginine 123 and 132-133 (TY) each bind ATP. The AMP site is built by arginine 156 and arginine 167. Lysine 200 lines the ATP pocket.

The protein belongs to the adenylate kinase family. As to quaternary structure, monomer.

The protein localises to the cytoplasm. The enzyme catalyses AMP + ATP = 2 ADP. Its pathway is purine metabolism; AMP biosynthesis via salvage pathway; AMP from ADP: step 1/1. Catalyzes the reversible transfer of the terminal phosphate group between ATP and AMP. Plays an important role in cellular energy homeostasis and in adenine nucleotide metabolism. The polypeptide is Adenylate kinase (Vibrio parahaemolyticus serotype O3:K6 (strain RIMD 2210633)).